A 359-amino-acid chain; its full sequence is Phospho-N-acetylmuramoyl-pentapeptide-transferase (359 aa).

10 helical membrane-spanning segments follow: residues 7 to 27 (RSLT…VNSY), 28 to 48 (IFNS…SLVI), 82 to 102 (MGGI…NNYV), 103 to 123 (DSVG…IGFL), 147 to 167 (ALIA…NPLI), 179 to 199 (IVIF…VNLT), 203 to 223 (DGLA…EIFI), 229 to 249 (LIIY…FLKY), 256 to 276 (IFMG…ISIL), and 337 to 357 (IVEN…VLKI).

This sequence belongs to the glycosyltransferase 4 family. MraY subfamily. Mg(2+) is required as a cofactor.

It is found in the cell inner membrane. The enzyme catalyses UDP-N-acetyl-alpha-D-muramoyl-L-alanyl-gamma-D-glutamyl-meso-2,6-diaminopimeloyl-D-alanyl-D-alanine + di-trans,octa-cis-undecaprenyl phosphate = di-trans,octa-cis-undecaprenyl diphospho-N-acetyl-alpha-D-muramoyl-L-alanyl-D-glutamyl-meso-2,6-diaminopimeloyl-D-alanyl-D-alanine + UMP. It participates in cell wall biogenesis; peptidoglycan biosynthesis. Its function is as follows. Catalyzes the initial step of the lipid cycle reactions in the biosynthesis of the cell wall peptidoglycan: transfers peptidoglycan precursor phospho-MurNAc-pentapeptide from UDP-MurNAc-pentapeptide onto the lipid carrier undecaprenyl phosphate, yielding undecaprenyl-pyrophosphoryl-MurNAc-pentapeptide, known as lipid I. The protein is Phospho-N-acetylmuramoyl-pentapeptide-transferase of Prochlorococcus marinus subsp. pastoris (strain CCMP1986 / NIES-2087 / MED4).